A 415-amino-acid polypeptide reads, in one-letter code: FXa-directed anticoagulant (415 aa).

The N-terminal stretch at 1–17 is a signal peptide; it reads MYLKIVILVTFPLVCFT. N-linked (GlcNAc...) asparagine glycosylation is found at Asn117, Asn166, Asn216, and Asn320.

It belongs to the serpin family. In terms of assembly, (Microbial infection) Interacts with Zika virus envelope protein E and Zika virus-like particles; the interaction does not affect Zika virus replication in human endothelial cells and keratinocytes. In terms of processing, the N-terminus is blocked. Female salivary gland (at protein level). Not detected in female carcass without head and salivary glands. Not detected in male tissues.

The protein resides in the secreted. Its function is as follows. Anticoagulant serpin-type protein inhibiting host coagulation factor Xa (F10). Does not inhibit host thrombin (F2) and trypsin. (Microbial infection) Does not affect Zika virus replication in human endothelial cells and keratinocytes. The protein is FXa-directed anticoagulant of Aedes aegypti (Yellowfever mosquito).